We begin with the raw amino-acid sequence, 124 residues long: Small ribosomal subunit protein uS13 (124 aa).

Positions 95-124 are disordered; sequence GLPVRGQRTHTNARTRKGPRRSVMGKRKKA.

The protein belongs to the universal ribosomal protein uS13 family. Part of the 30S ribosomal subunit. Forms a loose heterodimer with protein S19. Forms two bridges to the 50S subunit in the 70S ribosome.

Located at the top of the head of the 30S subunit, it contacts several helices of the 16S rRNA. In the 70S ribosome it contacts the 23S rRNA (bridge B1a) and protein L5 of the 50S subunit (bridge B1b), connecting the 2 subunits; these bridges are implicated in subunit movement. Contacts the tRNAs in the A and P-sites. The protein is Small ribosomal subunit protein uS13 of Syntrophobacter fumaroxidans (strain DSM 10017 / MPOB).